The following is a 328-amino-acid chain: Lipoyl synthase (328 aa).

Positions 56, 61, 67, 82, 86, 89, and 293 each coordinate [4Fe-4S] cluster. The region spanning tryptophan 68–serine 282 is the Radical SAM core domain.

The protein belongs to the radical SAM superfamily. Lipoyl synthase family. [4Fe-4S] cluster is required as a cofactor.

Its subcellular location is the cytoplasm. It catalyses the reaction [[Fe-S] cluster scaffold protein carrying a second [4Fe-4S](2+) cluster] + N(6)-octanoyl-L-lysyl-[protein] + 2 oxidized [2Fe-2S]-[ferredoxin] + 2 S-adenosyl-L-methionine + 4 H(+) = [[Fe-S] cluster scaffold protein] + N(6)-[(R)-dihydrolipoyl]-L-lysyl-[protein] + 4 Fe(3+) + 2 hydrogen sulfide + 2 5'-deoxyadenosine + 2 L-methionine + 2 reduced [2Fe-2S]-[ferredoxin]. The protein operates within protein modification; protein lipoylation via endogenous pathway; protein N(6)-(lipoyl)lysine from octanoyl-[acyl-carrier-protein]: step 2/2. In terms of biological role, catalyzes the radical-mediated insertion of two sulfur atoms into the C-6 and C-8 positions of the octanoyl moiety bound to the lipoyl domains of lipoate-dependent enzymes, thereby converting the octanoylated domains into lipoylated derivatives. The polypeptide is Lipoyl synthase (Frankia alni (strain DSM 45986 / CECT 9034 / ACN14a)).